A 160-amino-acid chain; its full sequence is D-aminoacyl-tRNA deacylase 2 (160 aa).

The short motif at 152-153 (GP) is the Gly-transPro motif, allows the protein to recognize chirality of D-amino acids element.

Belongs to the DTD family. As to quaternary structure, homodimer.

It localises to the cytoplasm. It catalyses the reaction a D-aminoacyl-tRNA + H2O = a tRNA + a D-alpha-amino acid + H(+). The enzyme catalyses glycyl-tRNA(Ala) + H2O = tRNA(Ala) + glycine + H(+). It carries out the reaction D-tyrosyl-tRNA(Tyr) + H2O = D-tyrosine + tRNA(Tyr). The catalysed reaction is L-alanyl-tRNA(Thr) + H2O = tRNA(Thr) + L-alanine + H(+). Its function is as follows. Deacylates mischarged D-aminoacyl-tRNAs. Also deacylates mischarged glycyl-tRNA(Ala), protecting cells against glycine mischarging by AlaRS. Probably acts by rejecting L-amino acids from its binding site rather than specific recognition of D-amino acids. Catalyzes the hydrolysis of D-tyrosyl-tRNA(Tyr), has no activity on correctly charged L-tyrosyl-tRNA(Tyr). By recycling D-aminoacyl-tRNA to D-amino acids and free tRNA molecules, this enzyme counteracts the toxicity associated with the formation of D-aminoacyl-tRNA entities in vivo and helps enforce protein L-homochirality. In contrast to DTD1, deacylates L-Ala mischarged on tRNA(Thr)(G4.U69) by alanine-tRNA ligase AARS. Can deacylate L-Ala due to a relaxed specificity for substrate chirality caused by the trans conformation of the Gly-Pro motif in the active site. Also hydrolyzes correctly charged, achiral, glycyl-tRNA(Gly) in vitro, although in vivo eef1a1a/EF-Tu may protect cognate achiral glycyl-tRNA(Gly) from DTD2-mediated deacetylation. The protein is D-aminoacyl-tRNA deacylase 2 (dtd2) of Danio rerio (Zebrafish).